Reading from the N-terminus, the 126-residue chain is Hydrogenase maturation factor HypA (126 aa).

A Ni(2+)-binding site is contributed by H2. Zn(2+) is bound by residues C78, C81, C97, and C100.

Belongs to the HypA/HybF family.

In terms of biological role, involved in the maturation of [NiFe] hydrogenases. Required for nickel insertion into the metal center of the hydrogenase. The sequence is that of Hydrogenase maturation factor HypA from Methanococcus maripaludis (strain C5 / ATCC BAA-1333).